The sequence spans 367 residues: MKEPLDLSKYSVRTDLAVEAHQMLQESQEEQKGIQGVIVKEREEEGTIITKVTIDEAASEAMGKKPGNYLTLEVQGIRQQDTELQQKVERIFAKEFSYFLEEVGVTKEASCLIVGLGNWNVTPDALGPIVVENVLVTRHLFQLQPESVEEGFRPVSAIRPGVMGITGIETSDVIYGIIEKTNPDFVIAIDALAARSIERVNSTIQISDTGIHPGSGVGNKRKELSKETLGIPVIAIGVPTVVDAVSITSDTIDFILKHFGREMKEGNKPSRSLLPAGFSFGEKKKLTEEDMPDEKSRNMFLGAVGTLEEEEKRRLIYEVLSPLGHNLMVTPKEVDTFIEDMANVIASGLNAALHHQIDQDNTGAYTH.

The propeptide occupies 1-15; that stretch reads MKEPLDLSKYSVRTD.

Belongs to the peptidase A25 family. Homotetramer. Post-translationally, autoproteolytically processed. The inactive tetrameric zymogen termed p46 autoprocesses to a smaller form termed p41, which is active only during spore germination.

It carries out the reaction Endopeptidase action with P4 Glu or Asp, P1 preferably Glu &gt; Asp, P1' hydrophobic and P2' Ala.. Its function is as follows. Initiates the rapid degradation of small, acid-soluble proteins during spore germination. The polypeptide is Germination protease (Bacillus cereus (strain G9842)).